We begin with the raw amino-acid sequence, 499 residues long: Thioredoxin reductase 1, cytoplasmic (499 aa).

Residues 22-23 (SG), 42-43 (DF), 58-59 (TC), and 63-67 (SCIPK) contribute to the FAD site. The cysteines at positions 59 and 64 are disulfide-linked. Lys68 carries the post-translational modification N6-succinyllysine. Position 131 is a phosphotyrosine (Tyr131). Residues 131 to 132 (YG) and Thr161 contribute to the FAD site. NADP(+)-binding positions include Arg166, 198–204 (ASYVALE), 221–222 (RS), Arg226, 226–228 (RGF), 292–293 (GR), and Lys315. Tyr200 is an FAD binding site. Residues Asp334, 341–343 (ELT), and His472 contribute to the FAD site. Glu341 lines the NADP(+) pocket. His472 serves as the catalytic Proton acceptor. Positions 497-498 (CU) form a cross-link, cysteinyl-selenocysteine (Cys-Sec). Position 498 (Sec498) is a non-standard amino acid, selenocysteine.

This sequence belongs to the class-I pyridine nucleotide-disulfide oxidoreductase family. As to quaternary structure, homodimer. Requires FAD as cofactor. ISGylated.

It localises to the cytoplasm. It catalyses the reaction [thioredoxin]-dithiol + NADP(+) = [thioredoxin]-disulfide + NADPH + H(+). The catalysed reaction is H2O2 + NADPH + H(+) = NADP(+) + 2 H2O. In terms of biological role, reduces disulfideprotein thioredoxin (Trx) to its dithiol-containing form. Homodimeric flavoprotein involved in the regulation of cellular redox reactions, growth and differentiation. Contains a selenocysteine residue at the C-terminal active site that is essential for catalysis. Also has reductase activity on hydrogen peroxide (H2O2). In Sus scrofa (Pig), this protein is Thioredoxin reductase 1, cytoplasmic (TXNRD1).